The sequence spans 493 residues: MDFIVAIFALFVISSFTITSTNAVEASTLLDIGNLSRSSFPRGFIFGAGSSAYQFEGAVNEGGRGPSIWDTFTHKYPEKIRDGSNADITVDQYHRYKEDVGIMKDQNMDSYRFSISWPRILPKGKLSGGINHEGIKYYNNLINELLANGIQPFVTLFHWDLPQVLEDEYGGFLNSGVINDFRDYTDLCFKEFGDRVRYWSTLNEPWVFSNSGYALGTNAPGRCSASNVAKPGDSGTGPYIVTHNQILAHAEAVHVYKTKYQAYQKGKIGITLVSNWLMPLDDNSIPDIKAAERSLDFQFGLFMEQLTTGDYSKSMRRIVKNRLPKFSKFESSLVNGSFDFIGINYYSSSYISNAPSHGNAKPSYSTNPMTNISFEKHGIPLGPRAASIWIYVYPYMFIQEDFEIFCYILKINITILQFSITENGMNEFNDATLPVEEALLNTYRIDYYYRHLYYIRSAIRAGSNVKGFYAWSFLDCNEWFAGFTVRFGLNFVD.

An N-terminal signal peptide occupies residues 1–18; the sequence is MDFIVAIFALFVISSFTI. Residue Asn34 is glycosylated (N-linked (GlcNAc...) asparagine). A beta-D-glucoside contacts are provided by residues Gln54, His158, and 203–204; that span reads NE. The active-site Proton donor is the Glu204. Asn335 is a glycosylation site (N-linked (GlcNAc...) asparagine). Position 346 (Tyr346) interacts with a beta-D-glucoside. Residues Asn371 and Asn412 are each glycosylated (N-linked (GlcNAc...) asparagine). Residues Glu422, Trp471, 478 to 479, and Phe487 contribute to the a beta-D-glucoside site; that span reads EW. The active-site Nucleophile is Glu422.

Belongs to the glycosyl hydrolase 1 family. In terms of tissue distribution, leaves.

It carries out the reaction Hydrolysis of terminal, non-reducing beta-D-glucosyl residues with release of beta-D-glucose.. In Trifolium repens (Creeping white clover), this protein is Non-cyanogenic beta-glucosidase.